The primary structure comprises 360 residues: 3-isopropylmalate dehydrogenase (360 aa).

76–89 (GPKWDTIERDIRPE) serves as a coordination point for NAD(+). Substrate is bound by residues Arg96, Arg106, Arg134, and Asp224. Mg(2+) contacts are provided by Asp224, Asp248, and Asp252. Residue 282 to 294 (GSAPDIAGKGIAN) coordinates NAD(+).

Belongs to the isocitrate and isopropylmalate dehydrogenases family. LeuB type 1 subfamily. As to quaternary structure, homodimer. Mg(2+) serves as cofactor. Mn(2+) is required as a cofactor.

The protein localises to the cytoplasm. The catalysed reaction is (2R,3S)-3-isopropylmalate + NAD(+) = 4-methyl-2-oxopentanoate + CO2 + NADH. It functions in the pathway amino-acid biosynthesis; L-leucine biosynthesis; L-leucine from 3-methyl-2-oxobutanoate: step 3/4. Its function is as follows. Catalyzes the oxidation of 3-carboxy-2-hydroxy-4-methylpentanoate (3-isopropylmalate) to 3-carboxy-4-methyl-2-oxopentanoate. The product decarboxylates to 4-methyl-2 oxopentanoate. The polypeptide is 3-isopropylmalate dehydrogenase (Pseudomonas syringae pv. syringae (strain B728a)).